A 95-amino-acid polypeptide reads, in one-letter code: uncharacterized protein (95 aa).

A signal peptide spans 1-17 (MTSSLVIYIFLWSRLIC).

This is an uncharacterized protein from Saccharomyces cerevisiae (strain ATCC 204508 / S288c) (Baker's yeast).